Consider the following 266-residue polypeptide: MQNYLDLLKKVLEEGEETKDRTGVGTRRIFGPQLRFKFEGNKIPIITTKRVFMKGVIIELLWFLQGSTNIKFLLENNVHIWDEWADDMGELGPVYGKQWRAWETKEGNKIDQISNIVNTLRNNPASRRIILNAWNVGEIDQMHLPPCHMMCQFSVNSKGGIITHLYQRSADLFLGVPFNISSYAILTRLLAMHSGLHASELIMTFGDAHIYNNHIEQVKLQLSREPLEQTTELFIDNRPNIFSHVYEDFKLEGYKYYPTIKAEVAV.

Residues arginine 21 and 127-128 each bind dUMP; that span reads RR. The active-site Nucleophile is the cysteine 147. DUMP contacts are provided by residues 168 to 171, asparagine 179, and 209 to 211; these read RSAD and HIY. A (6R)-5,10-methylene-5,6,7,8-tetrahydrofolate-binding site is contributed by aspartate 171. Alanine 265 lines the (6R)-5,10-methylene-5,6,7,8-tetrahydrofolate pocket.

This sequence belongs to the thymidylate synthase family. Bacterial-type ThyA subfamily. As to quaternary structure, homodimer.

Its subcellular location is the cytoplasm. The catalysed reaction is dUMP + (6R)-5,10-methylene-5,6,7,8-tetrahydrofolate = 7,8-dihydrofolate + dTMP. It participates in pyrimidine metabolism; dTTP biosynthesis. In terms of biological role, catalyzes the reductive methylation of 2'-deoxyuridine-5'-monophosphate (dUMP) to 2'-deoxythymidine-5'-monophosphate (dTMP) while utilizing 5,10-methylenetetrahydrofolate (mTHF) as the methyl donor and reductant in the reaction, yielding dihydrofolate (DHF) as a by-product. This enzymatic reaction provides an intracellular de novo source of dTMP, an essential precursor for DNA biosynthesis. The protein is Thymidylate synthase of Brachyspira hyodysenteriae (strain ATCC 49526 / WA1).